Here is a 215-residue protein sequence, read N- to C-terminus: Cytochrome b6 (215 aa).

Residues 32–52 (IFYCFGGIVFTCFLVQVATGF) traverse the membrane as a helical segment. Residue C35 coordinates heme c. 2 residues coordinate heme b: H86 and H100. Transmembrane regions (helical) follow at residues 90–110 (ASMMVMMMVLHVFRVYLTGGF), 116–136 (LTWVTGVILAVVTVSFGVTGY), and 186–206 (AHTFVLPLAAAVLMLTHFLMI). Heme b contacts are provided by H187 and H202.

The protein belongs to the cytochrome b family. PetB subfamily. As to quaternary structure, the 4 large subunits of the cytochrome b6-f complex are cytochrome b6, subunit IV (17 kDa polypeptide, PetD), cytochrome f and the Rieske protein, while the 4 small subunits are PetG, PetL, PetM and PetN. The complex functions as a dimer. The cofactor is heme b. Heme c is required as a cofactor.

The protein resides in the plastid. It localises to the chloroplast thylakoid membrane. Functionally, component of the cytochrome b6-f complex, which mediates electron transfer between photosystem II (PSII) and photosystem I (PSI), cyclic electron flow around PSI, and state transitions. In Trieres chinensis (Marine centric diatom), this protein is Cytochrome b6.